Reading from the N-terminus, the 348-residue chain is Signal recognition particle receptor FtsY (348 aa).

GTP is bound by residues 143-150, 225-229, and 289-292; these read GVNGVGKT, DTSGR, and TKMD.

This sequence belongs to the GTP-binding SRP family. FtsY subfamily. As to quaternary structure, part of the signal recognition particle protein translocation system, which is composed of SRP and FtsY.

The protein resides in the cell membrane. It is found in the cytoplasm. It catalyses the reaction GTP + H2O = GDP + phosphate + H(+). Involved in targeting and insertion of nascent membrane proteins into the cytoplasmic membrane. Acts as a receptor for the complex formed by the signal recognition particle (SRP) and the ribosome-nascent chain (RNC). The protein is Signal recognition particle receptor FtsY of Mycoplasma pneumoniae (strain ATCC 29342 / M129 / Subtype 1) (Mycoplasmoides pneumoniae).